A 335-amino-acid chain; its full sequence is Leukocyte cell-derived chemotaxin-2 homolog (335 aa).

The first 20 residues, 1–20 (MHLRTLHFLILIGIFIGGQT), serve as a signal peptide directing secretion. Disulfide bonds link Cys-28–Cys-66 and Cys-39–Cys-46. Asp-63 serves as a coordination point for Zn(2+). N-linked (GlcNAc...) asparagine glycosylation occurs at Asn-317.

Belongs to the LECT2/MIM-1 family. Component of a multi-protein dma-1 receptor-ligand complex, which is activated upon binding of lect-2, mnr-1 and sax-7 ligands to promote the morphogenesis of dendrites which extend from the PVD neuronal body. Within the complex interacts with sax-7; the interaction is required for lect-2 dendritic localization and enhances the binding of the mnr-1 and sax-7 ligands to the dma-1 receptor-ligand complex. In terms of tissue distribution, expressed in body wall muscle cells, along the boundary of the lateral hypodermis, seam cells, processes of the nervous system including commissures, sensory dendrites in the head, and lateral nerve tracts, and motor neurons and some mechanosensory neurons such as ALM.

It is found in the secreted. The protein localises to the cell junction. Its subcellular location is the extracellular space. The protein resides in the extracellular matrix. It localises to the basement membrane. It is found in the cell projection. The protein localises to the dendrite. Its subcellular location is the perikaryon. The protein resides in the cell surface. Its function is as follows. Muscle-derived dendritic guidance cue, which is required for the formation of somatosensory dendritic arbors which extend from PVD and FLP sensory neurons during development. Ligand of a multi-protein dma-1 receptor-ligand complex, which is activated upon binding of lect-2, mnr-1 and sax-7 ligands to control the growth of dendrites that extend anteriorly from the PVD neuronal cell body. Enhances the binding of the mnr-1 and sax-7 ligands to the dma-1 receptor-ligand complex. Restricts the growth of secondary PVD dendritic branches and any irregularly positioned ectopic tertiary dendritic branches that originate from secondary branches, and promotes the formation of stable higher order dendritic branches. In particular, it is required for the formation of quaternary PVD dendritic branches and promotes their innervation of body wall muscles. Promotes self-avoidance of tertiary dendritic branches of PVD sensory neurons. Not required for the growth of dendrites that extend from AIY and PVQ interneurons, DVB GABergic neurons, PLM and ALM mechanosensory neurons, AFD sensory neurons and DD/VD and DA/DB motor neurons. This chain is Leukocyte cell-derived chemotaxin-2 homolog, found in Caenorhabditis elegans.